Consider the following 725-residue polypeptide: Putative coiled-coil domain-containing protein 144B (725 aa).

Over residues 1–11 the composition is skewed to basic and acidic residues; that stretch reads MASWGGEKRGG. 5 disordered regions span residues 1–25, 87–188, 213–260, 453–485, and 528–586; these read MASW…ATRK, AARS…NLTE, LPEN…DCDR, NMNQ…DSDR, and EEEM…KVKN. Polar residues-rich tracts occupy residues 129 to 150 and 165 to 178; these read PESL…LSDE and PSVS…QSAT. Residues 215-244 are a coiled coil; it reads ENKESKEAEQDLELTSEEEQERLKGCENKQ. A compositionally biased stretch (acidic residues) spans 224-234; the sequence is QDLELTSEEEQ. The span at 453-467 shows a compositional bias: polar residues; it reads NMNQNSDSGSTNNYK. The stretch at 490 to 546 forms a coiled coil; that stretch reads YLHEELQQDMQKFKNEVNTLEEEFLALKKENVQLHKEVEEEMEKHRSNSTELSGTLT. Positions 528-537 are enriched in basic and acidic residues; it reads EEEMEKHRSN. The segment covering 543–552 has biased composition (low complexity); it reads GTLTDGTTVG. Residues 563 to 583 are compositionally biased toward basic and acidic residues; sequence PRKENEEHDRPADKTANEKNK. The stretch at 648-713 forms a coiled coil; sequence LLKLKNNHCD…ALKQENGRKE (66 aa).

This sequence belongs to the CCDC144 family.

The polypeptide is Putative coiled-coil domain-containing protein 144B (Homo sapiens (Human)).